The sequence spans 191 residues: Protein GrpE (191 aa).

This sequence belongs to the GrpE family. As to quaternary structure, homodimer.

The protein localises to the cytoplasm. In terms of biological role, participates actively in the response to hyperosmotic and heat shock by preventing the aggregation of stress-denatured proteins, in association with DnaK and GrpE. It is the nucleotide exchange factor for DnaK and may function as a thermosensor. Unfolded proteins bind initially to DnaJ; upon interaction with the DnaJ-bound protein, DnaK hydrolyzes its bound ATP, resulting in the formation of a stable complex. GrpE releases ADP from DnaK; ATP binding to DnaK triggers the release of the substrate protein, thus completing the reaction cycle. Several rounds of ATP-dependent interactions between DnaJ, DnaK and GrpE are required for fully efficient folding. This is Protein GrpE from Nitratidesulfovibrio vulgaris (strain ATCC 29579 / DSM 644 / CCUG 34227 / NCIMB 8303 / VKM B-1760 / Hildenborough) (Desulfovibrio vulgaris).